Consider the following 77-residue polypeptide: Short neurotoxin OH-32 (77 aa).

An N-terminal signal peptide occupies residues methionine 1–threonine 21. Intrachain disulfides connect cysteine 24-cysteine 40, cysteine 33-cysteine 58, cysteine 62-cysteine 70, and cysteine 71-cysteine 76.

Belongs to the three-finger toxin family. Short-chain subfamily. As to expression, expressed by the venom gland.

The protein resides in the secreted. This three-finger toxin binds and inhibits the nicotinic acetylcholine receptor (nAChR). The polypeptide is Short neurotoxin OH-32 (Ophiophagus hannah (King cobra)).